The following is a 338-amino-acid chain: Probable dual-specificity RNA methyltransferase RlmN (338 aa).

The active-site Proton acceptor is Glu-89. The Radical SAM core domain occupies 95 to 325; that stretch reads HNYGMSACVT…AILRKEQGHD (231 aa). Cys-102 and Cys-330 form a disulfide bridge. Cys-109, Cys-113, and Cys-116 together coordinate [4Fe-4S] cluster. Residues 156-157, Ser-188, 211-213, and Asn-287 each bind S-adenosyl-L-methionine; these read GE and SLH. Cys-330 acts as the S-methylcysteine intermediate in catalysis.

The protein belongs to the radical SAM superfamily. RlmN family. [4Fe-4S] cluster serves as cofactor.

It localises to the cytoplasm. The enzyme catalyses adenosine(2503) in 23S rRNA + 2 reduced [2Fe-2S]-[ferredoxin] + 2 S-adenosyl-L-methionine = 2-methyladenosine(2503) in 23S rRNA + 5'-deoxyadenosine + L-methionine + 2 oxidized [2Fe-2S]-[ferredoxin] + S-adenosyl-L-homocysteine. The catalysed reaction is adenosine(37) in tRNA + 2 reduced [2Fe-2S]-[ferredoxin] + 2 S-adenosyl-L-methionine = 2-methyladenosine(37) in tRNA + 5'-deoxyadenosine + L-methionine + 2 oxidized [2Fe-2S]-[ferredoxin] + S-adenosyl-L-homocysteine. Its function is as follows. Specifically methylates position 2 of adenine 2503 in 23S rRNA and position 2 of adenine 37 in tRNAs. The protein is Probable dual-specificity RNA methyltransferase RlmN of Acholeplasma laidlawii (strain PG-8A).